Consider the following 487-residue polypeptide: Betaine aldehyde dehydrogenase (487 aa).

Isoleucine 27 and aspartate 93 together coordinate K(+). 149 to 151 contributes to the NAD(+) binding site; the sequence is GAW. Catalysis depends on lysine 161, which acts as the Charge relay system. Residues 175–178 and 228–231 each bind NAD(+); these read KPSE and SVPT. Leucine 243 lines the K(+) pocket. Glutamate 249 serves as the catalytic Proton acceptor. NAD(+) is bound by residues glycine 251, cysteine 283, and glutamate 384. Cysteine 283 (nucleophile) is an active-site residue. Cysteine sulfenic acid (-SOH) is present on cysteine 283. Lysine 454 and glycine 457 together coordinate K(+). The active-site Charge relay system is glutamate 461.

This sequence belongs to the aldehyde dehydrogenase family. As to quaternary structure, dimer of dimers. It depends on K(+) as a cofactor.

The enzyme catalyses betaine aldehyde + NAD(+) + H2O = glycine betaine + NADH + 2 H(+). Its pathway is amine and polyamine biosynthesis; betaine biosynthesis via choline pathway; betaine from betaine aldehyde: step 1/1. Functionally, involved in the biosynthesis of the osmoprotectant glycine betaine. Catalyzes the irreversible oxidation of betaine aldehyde to the corresponding acid. This Brucella suis (strain ATCC 23445 / NCTC 10510) protein is Betaine aldehyde dehydrogenase.